Here is a 305-residue protein sequence, read N- to C-terminus: uncharacterized protein (305 aa).

The disordered stretch occupies residues 267 to 287; it reads ADEQEKNWNGGAKKNARAEPA.

This sequence belongs to the DnaB/DnaD family.

This is an uncharacterized protein from Listeria innocua serovar 6a (strain ATCC BAA-680 / CLIP 11262).